Here is a 418-residue protein sequence, read N- to C-terminus: Putative ion-transport protein YfeO (418 aa).

12 helical membrane-spanning segments follow: residues 10-30 (LLLSLPAVAIGIASSLILIVV), 54-74 (DSPFWIIAILTLTGIAVGLVI), 99-119 (ALLGLIVALILGLAGGVSLGP), 120-140 (EHPIMTVNIALAVAIGARLLP), 149-169 (ILASAGTIGALFGTPVAAALI), 186-206 (LFAPLMAAAAGALTTGLFFHP), 223-243 (ILSGAIVAAIAIAAGMVAVWC), 258-278 (VLVLGIGGFILGILGVMGGPV), 300-320 (DYFLLAVIKLAALVVAAASGF), 322-342 (GGRIFPAVFVGVALGLMLHEH), 343-363 (VPAVPAAITVSCAILGIVLVV), and 371-391 (LFMAAVVVPNTTLLPLLCIVM).

It belongs to the chloride channel (TC 2.A.49) family.

The protein localises to the cell membrane. The protein is Putative ion-transport protein YfeO of Escherichia coli O17:K52:H18 (strain UMN026 / ExPEC).